Reading from the N-terminus, the 315-residue chain is Mitochondrial glycine transporter (315 aa).

3 Solcar repeats span residues 19–102, 125–206, and 221–305; these read SKTT…LRTG, TANL…LKRR, and KSSS…LILR. Helical transmembrane passes span 25–50, 77–103, 128–153, 181–204, 225–251, and 280–298; these read FTAG…TRVQ, GTLP…RTGL, LATG…VRYE, GFGA…EQLK, INFV…KTRL, and GLGL…AWTV.

Belongs to the mitochondrial carrier (TC 2.A.29) family. SLC25A38 subfamily.

It is found in the mitochondrion inner membrane. It carries out the reaction glycine(in) = glycine(out). Its function is as follows. Mitochondrial glycine transporter that imports glycine into the mitochondrial matrix. Plays an important role in providing glycine for the first enzymatic step in heme biosynthesis, the condensation of glycine with succinyl-CoA to produce 5-aminolevulinate (ALA) in the mitochondrial matrix. This chain is Mitochondrial glycine transporter, found in Aspergillus niger (strain ATCC MYA-4892 / CBS 513.88 / FGSC A1513).